Consider the following 101-residue polypeptide: NAD(P)H-quinone oxidoreductase subunit 4L, chloroplastic (101 aa).

Helical transmembrane passes span 2–22 (MLEH…YGLI), 32–52 (MCLE…SDFF), and 61–81 (IFSI…SAIV).

It belongs to the complex I subunit 4L family. In terms of assembly, NDH is composed of at least 16 different subunits, 5 of which are encoded in the nucleus.

The protein localises to the plastid. It is found in the chloroplast thylakoid membrane. It catalyses the reaction a plastoquinone + NADH + (n+1) H(+)(in) = a plastoquinol + NAD(+) + n H(+)(out). The enzyme catalyses a plastoquinone + NADPH + (n+1) H(+)(in) = a plastoquinol + NADP(+) + n H(+)(out). Functionally, NDH shuttles electrons from NAD(P)H:plastoquinone, via FMN and iron-sulfur (Fe-S) centers, to quinones in the photosynthetic chain and possibly in a chloroplast respiratory chain. The immediate electron acceptor for the enzyme in this species is believed to be plastoquinone. Couples the redox reaction to proton translocation, and thus conserves the redox energy in a proton gradient. In Gossypium hirsutum (Upland cotton), this protein is NAD(P)H-quinone oxidoreductase subunit 4L, chloroplastic.